Here is a 957-residue protein sequence, read N- to C-terminus: Glycine dehydrogenase (decarboxylating) (957 aa).

Residue K708 is modified to N6-(pyridoxal phosphate)lysine.

Belongs to the GcvP family. The glycine cleavage system is composed of four proteins: P, T, L and H. Requires pyridoxal 5'-phosphate as cofactor.

It carries out the reaction N(6)-[(R)-lipoyl]-L-lysyl-[glycine-cleavage complex H protein] + glycine + H(+) = N(6)-[(R)-S(8)-aminomethyldihydrolipoyl]-L-lysyl-[glycine-cleavage complex H protein] + CO2. In terms of biological role, the glycine cleavage system catalyzes the degradation of glycine. The P protein binds the alpha-amino group of glycine through its pyridoxal phosphate cofactor; CO(2) is released and the remaining methylamine moiety is then transferred to the lipoamide cofactor of the H protein. This Cronobacter sakazakii (strain ATCC BAA-894) (Enterobacter sakazakii) protein is Glycine dehydrogenase (decarboxylating).